The chain runs to 354 residues: Methylthioribose-1-phosphate isomerase (354 aa).

Residues 58–60, arginine 101, and glutamine 204 each bind substrate; that span reads RGA. Aspartate 245 acts as the Proton donor in catalysis. Residue 255–256 coordinates substrate; the sequence is NK.

This sequence belongs to the eIF-2B alpha/beta/delta subunits family. MtnA subfamily.

It catalyses the reaction 5-(methylsulfanyl)-alpha-D-ribose 1-phosphate = 5-(methylsulfanyl)-D-ribulose 1-phosphate. The protein operates within amino-acid biosynthesis; L-methionine biosynthesis via salvage pathway; L-methionine from S-methyl-5-thio-alpha-D-ribose 1-phosphate: step 1/6. Catalyzes the interconversion of methylthioribose-1-phosphate (MTR-1-P) into methylthioribulose-1-phosphate (MTRu-1-P). In Xanthomonas campestris pv. campestris (strain ATCC 33913 / DSM 3586 / NCPPB 528 / LMG 568 / P 25), this protein is Methylthioribose-1-phosphate isomerase.